Here is a 345-residue protein sequence, read N- to C-terminus: Hydroxymethylglutaryl-CoA synthase (345 aa).

Aspartate 28 lines the (3S)-3-hydroxy-3-methylglutaryl-CoA pocket. Glutamate 80 serves as the catalytic Proton donor/acceptor. The (3S)-3-hydroxy-3-methylglutaryl-CoA site is built by cysteine 112 and threonine 153. Cysteine 112 functions as the Acyl-thioester intermediate in the catalytic mechanism. CoA is bound at residue arginine 199. Positions 201 and 234 each coordinate (3S)-3-hydroxy-3-methylglutaryl-CoA. Histidine 234 serves as the catalytic Proton donor/acceptor. Lysine 239 contributes to the CoA binding site. (3S)-3-hydroxy-3-methylglutaryl-CoA is bound by residues arginine 243, asparagine 266, and serine 296.

It belongs to the thiolase-like superfamily. Archaeal HMG-CoA synthase family. Interacts with acetoacetyl-CoA thiolase that catalyzes the precedent step in the pathway and with a DUF35 protein. The acetoacetyl-CoA thiolase/HMG-CoA synthase complex channels the intermediate via a fused CoA-binding site, which allows for efficient coupling of the endergonic thiolase reaction with the exergonic HMGCS reaction.

It catalyses the reaction acetoacetyl-CoA + acetyl-CoA + H2O = (3S)-3-hydroxy-3-methylglutaryl-CoA + CoA + H(+). It functions in the pathway metabolic intermediate biosynthesis; (R)-mevalonate biosynthesis; (R)-mevalonate from acetyl-CoA: step 2/3. Its function is as follows. Catalyzes the condensation of acetyl-CoA with acetoacetyl-CoA to form 3-hydroxy-3-methylglutaryl-CoA (HMG-CoA). Functions in the mevalonate (MVA) pathway leading to isopentenyl diphosphate (IPP), a key precursor for the biosynthesis of isoprenoid compounds that are building blocks of archaeal membrane lipids. The chain is Hydroxymethylglutaryl-CoA synthase from Methanocaldococcus jannaschii (strain ATCC 43067 / DSM 2661 / JAL-1 / JCM 10045 / NBRC 100440) (Methanococcus jannaschii).